The chain runs to 883 residues: MLQLWKVVRPARQLELHRLILLLIAFSLGSMGFLAYYVSTSPKAKEPLPLPLGDCSSGGAAGPGPARPPVPPRPPRPPETARTEPVVLVFVESAYSQLGQEIVAILESSRFRYSTELAPGRGDMPTLTDNTHGRYVLVIYENLLKYVNLDAWSRELLDRYCVEYGVGIIGFFRAHEHSLLSAQLKGFPLFLHSNLGLRDYQVNPSAPLLHLTRPSRLEPGPLPGDDWTIFQSNHSTYEPVLLASLRPAEPAVPGPVLRRARLPTVVQDLGLHDGIQRVLFGHGLSFWLHKLIFVDAVAYLTGKRLCLDLDRYILVDIDDIFVGKEGTRMKVADVEALLTTQNKLRTLVPNFTFNLGFSGKFYHTGTEEEDAGDDMLLKHRKEFWWFPHMWSHMQPHLFHNRSVLADQMRLNKQFALEHGIPTDLGYAVAPHHSGVYPIHTQLYEAWKSVWGIQVTSTEEYPHLRPARYRRGFIHNGIMVLPRQTCGLFTHTIFYNEYPGGSRELDRSIRGGELFLTVLLNPISIFMTHLSNYGNDRLGLYTFESLVRFLQCWTRLRLQTLPPVPLAQKYFELFPQERSPLWQNPCDDKRHKDIWSKEKTCDRLPKFLIVGPQKTGTTAIHFFLSLHPAVTSSFPSPSTFEEIQFFNSPNYHKGIDWYMDFFPVPSNASTDFLFEKSATYFDSEVVPRRGAALLPRAKIITVLTNPADRAYSWYQHQRAHGDPVALNYTFYQVISASSQTPLALRSLQNRCLVPGYYSTHLQRWLTYYPSGQLLIVDGQELRTNPAASMESIQKFLGITPFLNYTRTLRFDDDKGFWCQGLEGGKTRCLGRSKGRRYPDMDTESRLFLTDFFRNHNLELSKLLSRLGQPVPSWLREELQHSSLG.

At 1–18 (MLQLWKVVRPARQLELHR) the chain is on the cytoplasmic side. A helical; Signal-anchor for type II membrane protein membrane pass occupies residues 19–39 (LILLLIAFSLGSMGFLAYYVS). The Lumenal segment spans residues 40–883 (TSPKAKEPLP…REELQHSSLG (844 aa)). The interval 41–597 (SPKAKEPLPL…KRHKDIWSKE (557 aa)) is heparan sulfate N-deacetylase 2. The disordered stretch occupies residues 49-81 (PLPLGDCSSGGAAGPGPARPPVPPRPPRPPETA). Positions 65-78 (PARPPVPPRPPRPP) are enriched in pro residues. Asparagine 233, asparagine 350, and asparagine 400 each carry an N-linked (GlcNAc...) asparagine glycan. The heparan sulfate N-sulfotransferase 2 stretch occupies residues 598–883 (KTCDRLPKFL…REELQHSSLG (286 aa)). Lysine 613 functions as the For sulfotransferase activity in the catalytic mechanism. 613 to 617 (KTGTT) contributes to the 3'-phosphoadenylyl sulfate binding site. Residue asparagine 666 is glycosylated (N-linked (GlcNAc...) asparagine). Serine 711 serves as a coordination point for 3'-phosphoadenylyl sulfate. Asparagine 726 and asparagine 802 each carry an N-linked (GlcNAc...) asparagine glycan. Residues cysteine 817 and cysteine 827 are joined by a disulfide bond. Residue 832-836 (KGRRY) participates in 3'-phosphoadenylyl sulfate binding.

Belongs to the sulfotransferase 1 family. NDST subfamily. As to quaternary structure, monomer.

It is found in the golgi apparatus membrane. The enzyme catalyses alpha-D-glucosaminyl-[heparan sulfate](n) + 3'-phosphoadenylyl sulfate = N-sulfo-alpha-D-glucosaminyl-[heparan sulfate](n) + adenosine 3',5'-bisphosphate + 2 H(+). The protein operates within glycan metabolism; heparan sulfate biosynthesis. It participates in glycan metabolism; heparin biosynthesis. Functionally, essential bifunctional enzyme that catalyzes both the N-deacetylation and the N-sulfation of glucosamine (GlcNAc) of the glycosaminoglycan in heparan sulfate. Modifies the GlcNAc-GlcA disaccharide repeating sugar backbone to make N-sulfated heparosan, a prerequisite substrate for later modifications in heparin biosynthesis. Plays a role in determining the extent and pattern of sulfation of heparan sulfate. Required for the exosomal release of SDCBP, CD63 and syndecan. The protein is Bifunctional heparan sulfate N-deacetylase/N-sulfotransferase 2 (NDST2) of Homo sapiens (Human).